The following is a 209-amino-acid chain: Large ribosomal subunit protein uL3 (209 aa).

The residue at position 150 (Gln150) is an N5-methylglutamine.

Belongs to the universal ribosomal protein uL3 family. In terms of assembly, part of the 50S ribosomal subunit. Forms a cluster with proteins L14 and L19. In terms of processing, methylated by PrmB.

In terms of biological role, one of the primary rRNA binding proteins, it binds directly near the 3'-end of the 23S rRNA, where it nucleates assembly of the 50S subunit. The sequence is that of Large ribosomal subunit protein uL3 from Buchnera aphidicola subsp. Acyrthosiphon pisum (strain 5A).